A 109-amino-acid chain; its full sequence is Cell division protein ZapA (109 aa).

Positions 21–99 (PEQLDALNQA…IEQALLEQGR (79 aa)) form a coiled coil.

Belongs to the ZapA family. Type 1 subfamily. Homodimer. Interacts with FtsZ.

The protein localises to the cytoplasm. In terms of biological role, activator of cell division through the inhibition of FtsZ GTPase activity, therefore promoting FtsZ assembly into bundles of protofilaments necessary for the formation of the division Z ring. It is recruited early at mid-cell but it is not essential for cell division. The sequence is that of Cell division protein ZapA from Edwardsiella ictaluri (strain 93-146).